The chain runs to 263 residues: tRNA pseudouridine synthase A (263 aa).

Asp-54 serves as the catalytic Nucleophile. Tyr-113 is a binding site for substrate.

It belongs to the tRNA pseudouridine synthase TruA family. In terms of assembly, homodimer.

The enzyme catalyses uridine(38/39/40) in tRNA = pseudouridine(38/39/40) in tRNA. Functionally, formation of pseudouridine at positions 38, 39 and 40 in the anticodon stem and loop of transfer RNAs. The polypeptide is tRNA pseudouridine synthase A (Lactobacillus helveticus (strain DPC 4571)).